A 278-amino-acid polypeptide reads, in one-letter code: Elongation factor Ts (278 aa).

Residues 79 to 82 (TDFV) form an involved in Mg(2+) ion dislocation from EF-Tu region.

This sequence belongs to the EF-Ts family.

The protein localises to the cytoplasm. In terms of biological role, associates with the EF-Tu.GDP complex and induces the exchange of GDP to GTP. It remains bound to the aminoacyl-tRNA.EF-Tu.GTP complex up to the GTP hydrolysis stage on the ribosome. The chain is Elongation factor Ts from Borrelia hermsii (strain HS1 / DAH).